We begin with the raw amino-acid sequence, 650 residues long: Threonine--tRNA ligase (650 aa).

The TGS domain occupies 1–66 (MVQITLPDGS…DQDAKLAIVT (66 aa)). The catalytic stretch occupies residues 247-538 (DHRKIGRDLD…LIENHAGAMP (292 aa)). Zn(2+) contacts are provided by cysteine 338, histidine 389, and histidine 515.

It belongs to the class-II aminoacyl-tRNA synthetase family. Homodimer. The cofactor is Zn(2+).

The protein localises to the cytoplasm. It catalyses the reaction tRNA(Thr) + L-threonine + ATP = L-threonyl-tRNA(Thr) + AMP + diphosphate + H(+). In terms of biological role, catalyzes the attachment of threonine to tRNA(Thr) in a two-step reaction: L-threonine is first activated by ATP to form Thr-AMP and then transferred to the acceptor end of tRNA(Thr). Also edits incorrectly charged L-seryl-tRNA(Thr). The sequence is that of Threonine--tRNA ligase from Bordetella avium (strain 197N).